We begin with the raw amino-acid sequence, 408 residues long: Argininosuccinate synthase (408 aa).

ATP is bound by residues 16–24 (AYSGGLDTS) and Ala44. Positions 96 and 101 each coordinate L-citrulline. Residue Gly126 coordinates ATP. L-aspartate contacts are provided by Thr128, Asn132, and Asp133. L-citrulline is bound at residue Asn132. Residues Arg136, Ser185, Ser194, Glu270, and Tyr282 each coordinate L-citrulline.

It belongs to the argininosuccinate synthase family. Type 1 subfamily. In terms of assembly, homotetramer.

Its subcellular location is the cytoplasm. The enzyme catalyses L-citrulline + L-aspartate + ATP = 2-(N(omega)-L-arginino)succinate + AMP + diphosphate + H(+). It functions in the pathway amino-acid biosynthesis; L-arginine biosynthesis; L-arginine from L-ornithine and carbamoyl phosphate: step 2/3. This Shewanella woodyi (strain ATCC 51908 / MS32) protein is Argininosuccinate synthase.